The sequence spans 458 residues: ATP synthase subunit beta (458 aa).

148 to 155 is a binding site for ATP; the sequence is GGAGVGKT.

The protein belongs to the ATPase alpha/beta chains family. In terms of assembly, F-type ATPases have 2 components, CF(1) - the catalytic core - and CF(0) - the membrane proton channel. CF(1) has five subunits: alpha(3), beta(3), gamma(1), delta(1), epsilon(1). CF(0) has three main subunits: a(1), b(2) and c(9-12). The alpha and beta chains form an alternating ring which encloses part of the gamma chain. CF(1) is attached to CF(0) by a central stalk formed by the gamma and epsilon chains, while a peripheral stalk is formed by the delta and b chains.

It is found in the cell inner membrane. It carries out the reaction ATP + H2O + 4 H(+)(in) = ADP + phosphate + 5 H(+)(out). Its function is as follows. Produces ATP from ADP in the presence of a proton gradient across the membrane. The catalytic sites are hosted primarily by the beta subunits. In Pseudomonas entomophila (strain L48), this protein is ATP synthase subunit beta.